The chain runs to 243 residues: uncharacterized protein (243 aa).

[4Fe-4S] cluster contacts are provided by Cys120 and Cys157.

Homodimer. The cofactor is [4Fe-4S] cluster.

This is an uncharacterized protein from Methanocaldococcus jannaschii (strain ATCC 43067 / DSM 2661 / JAL-1 / JCM 10045 / NBRC 100440) (Methanococcus jannaschii).